The following is a 70-amino-acid chain: Small ribosomal subunit protein bS21 (70 aa).

The protein belongs to the bacterial ribosomal protein bS21 family.

The polypeptide is Small ribosomal subunit protein bS21 (Polynucleobacter asymbioticus (strain DSM 18221 / CIP 109841 / QLW-P1DMWA-1) (Polynucleobacter necessarius subsp. asymbioticus)).